The chain runs to 151 residues: GTP-dependent dephospho-CoA kinase (151 aa).

The GTP site is built by D30, V31, D49, K51, and E104.

It belongs to the GTP-dependent DPCK family.

It carries out the reaction 3'-dephospho-CoA + GTP = GDP + CoA + H(+). Its pathway is cofactor biosynthesis; coenzyme A biosynthesis. Its function is as follows. Catalyzes the GTP-dependent phosphorylation of the 3'-hydroxyl group of dephosphocoenzyme A to form coenzyme A (CoA). This is GTP-dependent dephospho-CoA kinase from Cenarchaeum symbiosum (strain A).